The following is a 438-amino-acid chain: Phosphatidylcholine-sterol acyltransferase (438 aa).

An N-terminal signal peptide occupies residues 1–24 (MGLPGSPWQRVLLLLGLLLPPATP). N44 carries N-linked (GlcNAc...) asparagine glycosylation. Cysteines 74 and 98 form a disulfide. N-linked (GlcNAc...) asparagine glycosylation occurs at N108. The active-site Nucleophile is S205. The N-linked (GlcNAc...) asparagine glycan is linked to N296. A disulfide bridge links C337 with C380. The active-site Charge relay system is the D369. N397 carries an N-linked (GlcNAc...) asparagine glycan. The active-site Charge relay system is H401. N-linked (GlcNAc...) asparagine glycosylation is present at N408.

Belongs to the AB hydrolase superfamily. Lipase family. In terms of tissue distribution, detected in blood plasma. Produced and secreted by astrocytes (at protein level). Abundantly expressed in liver, brain and testis with highest levels in liver. In the brain, found in cerebellum, cerebral cortex, hippocampus and brain stem. Located to neurons and neuroglia.

It is found in the secreted. The enzyme catalyses a sterol + a 1,2-diacyl-sn-glycero-3-phosphocholine = a sterol ester + a 1-acyl-sn-glycero-3-phosphocholine. It catalyses the reaction a 1-O-alkyl-2-acetyl-sn-glycero-3-phosphocholine + H2O = a 1-O-alkyl-sn-glycero-3-phosphocholine + acetate + H(+). The catalysed reaction is a 1-hexadecanoyl-2-acyl-sn-glycero-3-phosphocholine + (24S)-hydroxycholesterol = (24S)-24-hydroxycholesterol ester + 1-hexadecanoyl-sn-glycero-3-phosphocholine. It carries out the reaction (24S)-hydroxycholesterol + 1-hexadecanoyl-2-(9Z,12Z-octadecadienoyl)-sn-glycero-3-phosphocholine = (24S)-hydroxycholesterol 3-linoleoate + 1-hexadecanoyl-sn-glycero-3-phosphocholine. The enzyme catalyses 1-hexadecanoyl-2-(5Z,8Z,11Z,14Z-eicosatetraenoyl)-sn-glycero-3-phosphocholine + cholesterol = cholesteryl (5Z,8Z,11Z,14Z)-eicosatetraenoate + 1-hexadecanoyl-sn-glycero-3-phosphocholine. It catalyses the reaction 1-hexadecanoyl-2-(9Z-octadecenoyl)-sn-glycero-3-phosphocholine + cholesterol = cholesteryl (9Z-octadecenoate) + 1-hexadecanoyl-sn-glycero-3-phosphocholine. The catalysed reaction is 1-hexadecanoyl-2-(8Z,11Z,14Z-eicosatrienoyl)-sn-glycero-3-phosphocholine + cholesterol = cholesteryl (8Z,11Z,14Z)-eicosatrienoate + 1-hexadecanoyl-sn-glycero-3-phosphocholine. It carries out the reaction 1-hexadecanoyl-2-(5Z,8Z,11Z-eicosatrienoyl)-sn-glycero-3-phosphocholine + cholesterol = cholesteryl (5Z,8Z,11Z)-eicosatrienoate + 1-hexadecanoyl-sn-glycero-3-phosphocholine. The enzyme catalyses 1-hexadecanoyl-2-(5Z,8Z,11Z,14Z,17Z-eicosapentaenoyl)-sn-glycero-3-phosphocholine + cholesterol = (5Z,8Z,11Z,14Z,17Z-eicosapentaenoyl)-cholesterol + 1-hexadecanoyl-sn-glycero-3-phosphocholine. It catalyses the reaction 1-hexadecanoyl-2-(9Z,12Z-octadecadienoyl)-sn-glycero-3-phosphocholine + cholesterol = cholesteryl (9Z,12Z)-octadecadienoate + 1-hexadecanoyl-sn-glycero-3-phosphocholine. The catalysed reaction is 1-hexadecanoyl-2-(6Z,9Z,12Z-octadecatrienoyl)-sn-glycero-3-phosphocholine + cholesterol = (6Z,9Z,12Z-octadecatrienoyl)-cholesterol + 1-hexadecanoyl-sn-glycero-3-phosphocholine. It carries out the reaction 1-hexadecanoyl-2-(11Z,14Z,17Z-eicosatrienoyl)-sn-glycero-3-phosphocholine + cholesterol = (11Z,14Z,17Z-eicosatrienoyl)-cholesterol + 1-hexadecanoyl-sn-glycero-3-phosphocholine. The enzyme catalyses 1-hexadecanoyl-2-(9Z,12Z,15Z-octadecatrienoyl)-sn-glycero-3-phosphocholine + cholesterol = (9Z,12Z,15Z-octadecatrienoyl)-cholesterol + 1-hexadecanoyl-sn-glycero-3-phosphocholine. It catalyses the reaction 1-hexadecanoyl-2-(9Z,12Z-octadecadienoyl)-sn-glycero-3-phosphocholine + H2O = (9Z,12Z)-octadecadienoate + 1-hexadecanoyl-sn-glycero-3-phosphocholine + H(+). The catalysed reaction is 1-hexadecanoyl-2-(5Z,8Z,11Z,14Z-eicosatetraenoyl)-sn-glycero-3-phosphocholine + H2O = 1-hexadecanoyl-sn-glycero-3-phosphocholine + (5Z,8Z,11Z,14Z)-eicosatetraenoate + H(+). It carries out the reaction a 1-O-alkyl-2-acetyl-sn-glycero-3-phosphocholine + 1-hexadecanoyl-sn-glycero-3-phosphocholine = 1-hexadecanoyl-2-acetyl-sn-glycero-3-phosphocholine + a 1-O-alkyl-sn-glycero-3-phosphocholine. Its activity is regulated as follows. APOA1 is the most potent activator in plasma. Also activated by APOE, APOC1 and APOA4. Central enzyme in the extracellular metabolism of plasma lipoproteins. Synthesized mainly in the liver and secreted into plasma where it converts cholesterol and phosphatidylcholines (lecithins) to cholesteryl esters and lysophosphatidylcholines on the surface of high and low density lipoproteins (HDLs and LDLs). The cholesterol ester is then transported back to the liver. Also produced in the brain by primary astrocytes, and esterifies free cholesterol on nascent APOE-containing lipoproteins secreted from glia and influences cerebral spinal fluid (CSF) APOE- and APOA1 levels. Together with APOE and the cholesterol transporter ABCA1, plays a key role in the maturation of glial-derived, nascent lipoproteins. Required for remodeling high-density lipoprotein particles into their spherical forms. Has a preference for plasma 16:0-18:2 or 18:O-18:2 phosphatidylcholines. Catalyzes the hydrolysis of 1-O-alkyl-2-acetyl-sn-glycero-3-phosphocholine (platelet-activating factor or PAF) to 1-O-alkyl-sn-glycero-3-phosphocholine (lyso-PAF). Also catalyzes the transfer of the acetate group from PAF to 1-hexadecanoyl-sn-glycero-3-phosphocholine forming lyso-PAF. Catalyzes the esterification of (24S)-hydroxycholesterol (24(S)OH-C), also known as cerebrosterol to produce 24(S)OH-C monoesters. This is Phosphatidylcholine-sterol acyltransferase (Lcat) from Mus musculus (Mouse).